The following is a 174-amino-acid chain: Chorismate pyruvate-lyase (174 aa).

Residues M36, R78, L116, and E157 each coordinate substrate.

The protein belongs to the UbiC family. As to quaternary structure, monomer.

It localises to the cytoplasm. The catalysed reaction is chorismate = 4-hydroxybenzoate + pyruvate. The protein operates within cofactor biosynthesis; ubiquinone biosynthesis. Its function is as follows. Removes the pyruvyl group from chorismate, with concomitant aromatization of the ring, to provide 4-hydroxybenzoate (4HB) for the ubiquinone pathway. The sequence is that of Chorismate pyruvate-lyase from Yersinia pestis bv. Antiqua (strain Angola).